The chain runs to 1035 residues: Enteropeptidase (1035 aa).

A lipid anchor (N-myristoyl glycine) is attached at glycine 2. The Cytoplasmic segment spans residues 2–18 (GSKRSVPSRHRSLTTYE). The helical; Signal-anchor for type II membrane protein transmembrane segment at 19–47 (VMFAVLFVILVALCAGLIAVSWLSIQGSV) threads the bilayer. The Extracellular portion of the chain corresponds to 48-1035 (KDAAFGKSHE…FTEWIQSFLH (988 aa)). An SEA domain is found at 54-169 (KSHEARGTLK…NSIDITASLE (116 aa)). Residues asparagine 116, asparagine 147, asparagine 170, and asparagine 194 are each glycosylated (N-linked (GlcNAc...) asparagine). An LDL-receptor class A 1 domain is found at 197-238 (IECPPDSRLCADALKCIAIDLFCDGELNCPDGSDEDNKTCAT). Cystine bridges form between cysteine 199–cysteine 212, cysteine 206–cysteine 225, cysteine 219–cysteine 236, and cysteine 240–cysteine 269. Residues asparagine 233, asparagine 263, asparagine 264, asparagine 404, asparagine 456, asparagine 486, asparagine 519, asparagine 550, and asparagine 646 are each glycosylated (N-linked (GlcNAc...) asparagine). The 111-residue stretch at 240-350 (CDGRFLLTGS…IGFKVTYTAF (111 aa)) folds into the CUB 1 domain. One can recognise an MAM domain in the interval 358-520 (YEKINCNFED…ISLTYGICNV (163 aa)). Cysteine 540 and cysteine 568 form a disulfide bridge. A CUB 2 domain is found at 540-650 (CGGPHDLWEP…QGFKANFTTG (111 aa)). The LDL-receptor class A 2 domain maps to 657–695 (EPCKEDNFQCKDGECIPLVNLCDGFPHCKDGSDEAHCVR). Disulfide bonds link cysteine 659–cysteine 671, cysteine 666–cysteine 684, and cysteine 678–cysteine 693. An SRCR domain is found at 694 to 787 (VRLFNGTTDS…LILLQCNYKS (94 aa)). N-linked (GlcNAc...) asparagine glycosylation is found at asparagine 698, asparagine 722, asparagine 741, and asparagine 762. 6 disulfide bridges follow: cysteine 773–cysteine 783, cysteine 788–cysteine 912, cysteine 826–cysteine 842, cysteine 926–cysteine 993, cysteine 957–cysteine 972, and cysteine 983–cysteine 1011. A Peptidase S1 domain is found at 801–1035 (IVGGSDSREG…FTEWIQSFLH (235 aa)). The Charge relay system role is filled by histidine 841. Asparagine 864 is a glycosylation site (N-linked (GlcNAc...) asparagine). Aspartate 892 acts as the Charge relay system in catalysis. N-linked (GlcNAc...) asparagine glycosylation is found at asparagine 903 and asparagine 965. The Charge relay system role is filled by serine 987.

It belongs to the peptidase S1 family. As to quaternary structure, heterodimer of a catalytic (light) chain and a multidomain (heavy) chain linked by a disulfide bond. In terms of processing, the chains are derived from a single precursor that is cleaved by a trypsin-like protease. In terms of tissue distribution, intestinal brush border.

The protein resides in the membrane. It carries out the reaction Activation of trypsinogen by selective cleavage of 6-Lys-|-Ile-7 bond.. Functionally, responsible for initiating activation of pancreatic proteolytic proenzymes (trypsin, chymotrypsin and carboxypeptidase A). It catalyzes the conversion of trypsinogen to trypsin which in turn activates other proenzymes including chymotrypsinogen, procarboxypeptidases, and proelastases. The sequence is that of Enteropeptidase (TMPRSS15) from Bos taurus (Bovine).